We begin with the raw amino-acid sequence, 294 residues long: Protein C3orf33 (294 aa).

A2 carries the post-translational modification N-acetylalanine. The helical transmembrane segment at 40–56 (ISTGMAIAGIMLLLRSI) threads the bilayer.

As to expression, highly expressed in ileocecal tissue and endometrium.

It is found in the membrane. It localises to the secreted. In terms of biological role, secreted protein may play a role in transcription regulation via the MAPK3/MAPK1 pathway through an unidentified receptor on the plasma membrane. This is Protein C3orf33 (C3orf33) from Homo sapiens (Human).